The chain runs to 880 residues: GAS2-like protein 2 (880 aa).

The Calponin-homology (CH) domain occupies 32–159 (EAMKEDLAEW…CLLELGRRAW (128 aa)). The interval 180 to 200 (RRELALPPPDPSPPAPPRRQP) is disordered. Over residues 185–198 (LPPPDPSPPAPPRR) the composition is skewed to pro residues. In terms of domain architecture, GAR spans 201-273 (CHFRNLDQMV…HYLDKHDPCR (73 aa)). Disordered regions lie at residues 283-360 (SFLK…MAPF), 372-437 (WRQP…NPTP), 489-533 (ESVR…ELGR), and 676-880 (APTG…ESWV). Residues 301 to 315 (GPSQTQPTMTISRSQ) are compositionally biased toward polar residues. Positions 438-880 (QRLRAIEATT…PLPPEEESWV (443 aa)) are interaction with ADORA2A. The span at 506–515 (RLPPARPPTP) shows a compositional bias: pro residues. The segment covering 725 to 734 (QDCSASTVSA) has biased composition (polar residues). Basic residues-rich tracts occupy residues 757–767 (KGRRTLRKPKR) and 774–785 (LKLRPRIRPRRD).

This sequence belongs to the GAS2 family. In terms of assembly, interacts with ADORA2A (via its cytoplasmic C-terminal domain). Interacts with GNAS, GNAL, GNAQ, and GNA13. Interacts with MAPRE1. In terms of tissue distribution, expressed in bronchial and nasal epithelial cells (at protein level). Expressed in brain, kidney, lung, testis, fallopian tubes, and skeletal muscle. Expressed at low levels in stomach and colon.

The protein localises to the cytoplasm. It localises to the cytoskeleton. The protein resides in the cell membrane. Its subcellular location is the stress fiber. It is found in the cilium basal body. Involved in the cross-linking of microtubules and microfilaments. Regulates microtubule dynamics and stability by interacting with microtubule plus-end tracking proteins, such as MAPRE1, to regulate microtubule growth along actin stress fibers. Enhances ADORA2-mediated adenylyl cyclase activation by acting as a scaffold to recruit trimeric G-protein complexes to ADORA2A. Regulates ciliary orientation and performance in cells located in the airway. The sequence is that of GAS2-like protein 2 (GAS2L2) from Homo sapiens (Human).